The following is a 182-amino-acid chain: MFDIGFSELLLVFVIGLIVLGPQRLPVAVKTVAGWIRALRSLATTVQNELTQELKLQEFQDSLKKVEKASLENLTPELKASMDELRQAAESMKRTYSANDPEQASDEAHTIHNPVVKGNETQHEGVTPAAAETQASAPEQKPEPVKANVPESTETASVAAIDAEKKSAAPVVESSPSSSDKP.

The helical transmembrane segment at 1–21 (MFDIGFSELLLVFVIGLIVLG) threads the bilayer. Disordered regions lie at residues 88-107 (AAES…ASDE) and 121-182 (TQHE…SDKP). A compositionally biased stretch (low complexity) spans 168-182 (AAPVVESSPSSSDKP).

This sequence belongs to the TatB family. In terms of assembly, the Tat system comprises two distinct complexes: a TatABC complex, containing multiple copies of TatA, TatB and TatC subunits, and a separate TatA complex, containing only TatA subunits. Substrates initially bind to the TatABC complex, which probably triggers association of the separate TatA complex to form the active translocon.

Its subcellular location is the cell inner membrane. Functionally, part of the twin-arginine translocation (Tat) system that transports large folded proteins containing a characteristic twin-arginine motif in their signal peptide across membranes. Together with TatC, TatB is part of a receptor directly interacting with Tat signal peptides. TatB may form an oligomeric binding site that transiently accommodates folded Tat precursor proteins before their translocation. The polypeptide is Sec-independent protein translocase protein TatB (Salmonella typhi).